The primary structure comprises 233 residues: Snake venom serine protease ussurase (233 aa).

Positions 1 to 224 (VIGGVECNIN…YTDWIQSIIS (224 aa)) constitute a Peptidase S1 domain. 6 cysteine pairs are disulfide-bonded: Cys-7/Cys-138, Cys-25/Cys-41, Cys-73/Cys-231, Cys-117/Cys-185, Cys-149/Cys-164, and Cys-175/Cys-200. The active-site Charge relay system is His-40. A glycan (N-linked (GlcNAc...) asparagine) is linked at Asn-54. Asp-85 acts as the Charge relay system in catalysis. Ser-179 acts as the Charge relay system in catalysis.

The protein belongs to the peptidase S1 family. Snake venom subfamily. As to quaternary structure, monomer. In terms of tissue distribution, expressed by the venom gland.

The protein localises to the secreted. Snake venom serine protease that may act in the hemostasis system of the prey. The polypeptide is Snake venom serine protease ussurase (Gloydius ussuriensis (Ussuri mamushi)).